A 651-amino-acid polypeptide reads, in one-letter code: MSDKIYYVPSEWAQKAYVDDAHYQSMYAASVNDPHAFWGEHGKRIDWFTPYTKVKNTSFDPGHVSIKWFEDGITNVAYNCVDRHLETRGDQVAIIWEGDSPDESRNITYRELSSEVNKLANVLRNRGVEKGDRVTIYLPMIPEAAFAMLACARLGAIHSIVFGGFSPDSLAGRVADCGSKCIITADEGLRGGRKVPLKANVDAAIAQINGGVDHVIVVRRTGGKVDMLPGRDVYYDEATAMVTDECPAEHVNAEDPLFILYTSGSTGKPKGVLHTTGGYLVYASMTHQYIFDYHPGDIYWCTADVGWVTGHSYIVYGPLANGATTLMFEGIPNYPSVSRFWDVIDKHKVNIFYTAPTAIRSLMQAGEEPVKRTSRSSLRLLGSVGEPINPEAWEWYYRVVGEERCPIVDTWWQTETGGILITPLPGATKLKPGSATRPFFGVMPEVVDAEGKVLEGACEGNLVIADSWPGQMRTVYGDHERFEQTYFSTYPGKYFTGDGCRRDADGFYWITGRVDDVINVSGHRMGTAEVESALVAHPKVSEAAVVGFPHDIKGQGIYAYVTLMDGEEPTEELRKELVGWVRREIGPIASPDLIQFAPGLPKTRSGKIMRRILRKIAEDQFESLGDTSTLADPGVVEDLIHNRQNKRDAAA.

CoA is bound by residues 190 to 193, threonine 309, and asparagine 333; that span reads RGGR. ATP-binding positions include 385-387, 409-414, aspartate 498, and arginine 513; these read GEP and DTWWQT. Serine 521 contributes to the CoA binding site. Arginine 524 serves as a coordination point for ATP. Residues valine 535, histidine 537, and valine 540 each coordinate Mg(2+). Position 582 (arginine 582) interacts with CoA. N6-acetyllysine is present on lysine 607.

This sequence belongs to the ATP-dependent AMP-binding enzyme family. The cofactor is Mg(2+). Post-translationally, acetylated. Deacetylation by the SIR2-homolog deacetylase activates the enzyme.

It carries out the reaction acetate + ATP + CoA = acetyl-CoA + AMP + diphosphate. Its function is as follows. Catalyzes the conversion of acetate into acetyl-CoA (AcCoA), an essential intermediate at the junction of anabolic and catabolic pathways. AcsA undergoes a two-step reaction. In the first half reaction, AcsA combines acetate with ATP to form acetyl-adenylate (AcAMP) intermediate. In the second half reaction, it can then transfer the acetyl group from AcAMP to the sulfhydryl group of CoA, forming the product AcCoA. The protein is Acetyl-coenzyme A synthetase of Xanthobacter autotrophicus (strain ATCC BAA-1158 / Py2).